The sequence spans 402 residues: Subtilisin-like protease 9 (402 aa).

The signal sequence occupies residues 1–18 (MGFFRILFSLSLCALSLA). The propeptide occupies 19–120 (IPSKLIGLEN…VEVDRVVKLD (102 aa)). An Inhibitor I9 domain is found at 36–119 (SYIVVMKSAV…YVEVDRVVKL (84 aa)). Residues 130–402 (SWGLGRISHR…KKLLYNGSGA (273 aa)) form the Peptidase S8 domain. Catalysis depends on charge relay system residues Asp-162 and His-193. N-linked (GlcNAc...) asparagine glycosylation is present at Asn-254. The active-site Charge relay system is Ser-348. Residues Asn-390 and Asn-398 are each glycosylated (N-linked (GlcNAc...) asparagine).

Belongs to the peptidase S8 family.

It localises to the secreted. Secreted subtilisin-like serine protease with keratinolytic activity that contributes to pathogenicity. In Arthroderma gypseum (strain ATCC MYA-4604 / CBS 118893) (Microsporum gypseum), this protein is Subtilisin-like protease 9 (SUB9).